The following is an 835-amino-acid chain: Protein P (835 aa).

Residues 1-176 form a terminal protein domain (TP) region; that stretch reads MPLSYQHFRK…FFGTPYTWEH (176 aa). The segment at 177–334 is spacer; the sequence is KLQHGTQPVN…HCLHHIVKLL (158 aa). Disordered regions lie at residues 211–235 and 258–288; these read LGQK…WSRT and RHPS…PTSH. Residues 335 to 680 are polymerase/reverse transcriptase domain (RT); the sequence is DDWGPCQHHG…YMHLYPVARQ (346 aa). A Reverse transcriptase domain is found at 345-590; the sequence is HHFIRIPRTP…KALNFMGYVI (246 aa). Residues D417, D541, and D542 each contribute to the Mg(2+) site.

It belongs to the hepadnaviridae P protein family.

The enzyme catalyses DNA(n) + a 2'-deoxyribonucleoside 5'-triphosphate = DNA(n+1) + diphosphate. It carries out the reaction Endonucleolytic cleavage to 5'-phosphomonoester.. With respect to regulation, activated by host HSP70 and HSP40 in vitro to be able to bind the epsilon loop of the pgRNA. Because deletion of the RNase H region renders the protein partly chaperone-independent, the chaperones may be needed indirectly to relieve occlusion of the RNA-binding site by this domain. Inhibited by several reverse-transcriptase inhibitors: Lamivudine, Adefovir and Entecavir. Functionally, multifunctional enzyme that converts the viral RNA genome into dsDNA in viral cytoplasmic capsids. This enzyme displays a DNA polymerase activity that can copy either DNA or RNA templates, and a ribonuclease H (RNase H) activity that cleaves the RNA strand of RNA-DNA heteroduplexes in a partially processive 3'- to 5'-endonucleasic mode. Neo-synthesized pregenomic RNA (pgRNA) are encapsidated together with the P protein, and reverse-transcribed inside the nucleocapsid. Initiation of reverse-transcription occurs first by binding the epsilon loop on the pgRNA genome, and is initiated by protein priming, thereby the 5'-end of (-)DNA is covalently linked to P protein. Partial (+)DNA is synthesized from the (-)DNA template and generates the relaxed circular DNA (RC-DNA) genome. After budding and infection, the RC-DNA migrates in the nucleus, and is converted into a plasmid-like covalently closed circular DNA (cccDNA). The activity of P protein does not seem to be necessary for cccDNA generation, and is presumably released from (+)DNA by host nuclear DNA repair machinery. The sequence is that of Protein P from Woolly monkey hepatitis B virus (isolate Louisville) (WMHBV).